The sequence spans 389 residues: Putative phosphoserine aminotransferase (389 aa).

Position 45 (R45) interacts with L-glutamate. Pyridoxal 5'-phosphate contacts are provided by residues 79–80 (GT), W114, T169, D191, and Q214. K215 carries the post-translational modification N6-(pyridoxal phosphate)lysine. Residue 265–266 (NT) coordinates pyridoxal 5'-phosphate.

This sequence belongs to the class-V pyridoxal-phosphate-dependent aminotransferase family. SerC subfamily. In terms of assembly, homodimer. Pyridoxal 5'-phosphate is required as a cofactor.

The catalysed reaction is O-phospho-L-serine + 2-oxoglutarate = 3-phosphooxypyruvate + L-glutamate. The enzyme catalyses 4-(phosphooxy)-L-threonine + 2-oxoglutarate = (R)-3-hydroxy-2-oxo-4-phosphooxybutanoate + L-glutamate. The protein operates within amino-acid biosynthesis; L-serine biosynthesis; L-serine from 3-phospho-D-glycerate: step 2/3. Its pathway is cofactor biosynthesis; pyridoxine 5'-phosphate biosynthesis; pyridoxine 5'-phosphate from D-erythrose 4-phosphate: step 3/5. In terms of biological role, catalyzes the reversible conversion of 3-phosphohydroxypyruvate to phosphoserine and of 3-hydroxy-2-oxo-4-phosphonooxybutanoate to phosphohydroxythreonine. This is Putative phosphoserine aminotransferase from Schizosaccharomyces pombe (strain 972 / ATCC 24843) (Fission yeast).